A 407-amino-acid chain; its full sequence is Imidazolonepropionase (407 aa).

Positions 68 and 70 each coordinate Fe(3+). Zn(2+) is bound by residues His68 and His70. Arg77, Tyr140, and His173 together coordinate 4-imidazolone-5-propanoate. Position 140 (Tyr140) interacts with N-formimidoyl-L-glutamate. Fe(3+) is bound at residue His238. Zn(2+) is bound at residue His238. Gln241 provides a ligand contact to 4-imidazolone-5-propanoate. Asp313 contributes to the Fe(3+) binding site. Position 313 (Asp313) interacts with Zn(2+). N-formimidoyl-L-glutamate-binding residues include Asn315 and Gly317. Residue Thr318 coordinates 4-imidazolone-5-propanoate.

This sequence belongs to the metallo-dependent hydrolases superfamily. HutI family. Zn(2+) serves as cofactor. It depends on Fe(3+) as a cofactor.

The protein resides in the cytoplasm. It catalyses the reaction 4-imidazolone-5-propanoate + H2O = N-formimidoyl-L-glutamate. It participates in amino-acid degradation; L-histidine degradation into L-glutamate; N-formimidoyl-L-glutamate from L-histidine: step 3/3. Its function is as follows. Catalyzes the hydrolytic cleavage of the carbon-nitrogen bond in imidazolone-5-propanoate to yield N-formimidoyl-L-glutamate. It is the third step in the universal histidine degradation pathway. The chain is Imidazolonepropionase from Burkholderia cenocepacia (strain HI2424).